Here is a 216-residue protein sequence, read N- to C-terminus: Putative F-box protein At2g03610 (216 aa).

Positions 19–69 (NQDWSKLCPDLLRPILESLSSIDFHRAKTVCSDWYSVWKTCKGYDSKWNQN) constitute an F-box domain.

This Arabidopsis thaliana (Mouse-ear cress) protein is Putative F-box protein At2g03610.